Consider the following 875-residue polypeptide: Phosphoenolpyruvate carboxylase (875 aa).

Catalysis depends on residues H137 and K542.

It belongs to the PEPCase type 1 family. Mg(2+) is required as a cofactor.

The enzyme catalyses oxaloacetate + phosphate = phosphoenolpyruvate + hydrogencarbonate. Forms oxaloacetate, a four-carbon dicarboxylic acid source for the tricarboxylic acid cycle. The polypeptide is Phosphoenolpyruvate carboxylase (Pseudomonas putida (strain ATCC 47054 / DSM 6125 / CFBP 8728 / NCIMB 11950 / KT2440)).